The primary structure comprises 332 residues: Clavesin-1 (332 aa).

Residues 96 to 257 enclose the CRAL-TRIO domain; it reads IKRALMDGFP…EFGGTLPPYD (162 aa). The interval 300–332 is disordered; it reads KYMKRSHSVVEPGTLRHEEERENENTQPLLALD. The span at 313–323 shows a compositional bias: basic and acidic residues; that stretch reads TLRHEEERENE.

The protein localises to the golgi apparatus. It is found in the trans-Golgi network membrane. Its subcellular location is the early endosome membrane. It localises to the cytoplasmic vesicle. The protein resides in the clathrin-coated vesicle. Its function is as follows. Required for normal morphology of late endosomes and/or lysosomes in neurons. Binds phosphatidylinositol 3,5-bisphosphate (PtdIns(3,5)P2). The sequence is that of Clavesin-1 (clvs1) from Xenopus laevis (African clawed frog).